The sequence spans 156 residues: Ribosomal RNA large subunit methyltransferase H (156 aa).

S-adenosyl-L-methionine-binding positions include L72, G104, and 123–128 (LSEMTL).

The protein belongs to the RNA methyltransferase RlmH family. As to quaternary structure, homodimer.

The protein resides in the cytoplasm. It carries out the reaction pseudouridine(1915) in 23S rRNA + S-adenosyl-L-methionine = N(3)-methylpseudouridine(1915) in 23S rRNA + S-adenosyl-L-homocysteine + H(+). Functionally, specifically methylates the pseudouridine at position 1915 (m3Psi1915) in 23S rRNA. In Syntrophotalea carbinolica (strain DSM 2380 / NBRC 103641 / GraBd1) (Pelobacter carbinolicus), this protein is Ribosomal RNA large subunit methyltransferase H.